Here is a 393-residue protein sequence, read N- to C-terminus: MAEQQISNLLSMFDASHASQKLEITVQMMDTYHYRETPPDSSSSEGGSLSRYDERRVSLPLSHNAASPDIVSQLCFSTAMSSELNHRWKSQRLKVADSPYNYILTLPSKGIRGAFIDSLNVWLEVPEDETSVIKEVIGMLHNSSLIIDDFQDNSPLRRGKPSTHTVFGPAQAINTATYVIVKAIEKIQDIVGHDALADVTGTITTIFQGQAMDLWWTANAIVPSIQEYLLMVNDKTGALFRLSLELLALNSEASISDSALESLSSAVSLLGQYFQIRDDYMNLIDNKYTDQKGFCEDLDEGKYSLTLIHALQTDSSDLLTNILSMRRVQGKLTAQQKMLVLEVMKTNGSLDWTSKLLGMLHTRVVAEIESLEVSTKRDNHALRALVERLKLET.

Residues Lys109, Arg112, and His141 each coordinate isopentenyl diphosphate. Mg(2+) contacts are provided by Asp148 and Asp152. Arg157 is a dimethylallyl diphosphate binding site. Residue Arg158 participates in isopentenyl diphosphate binding. Residues Lys235, Thr236, and Gln275 each contribute to the dimethylallyl diphosphate site. Asp278 serves as a coordination point for Mg(2+). Dimethylallyl diphosphate-binding residues include Asn282, Lys292, and Lys302.

This sequence belongs to the FPP/GGPP synthase family. The cofactor is Mg(2+).

It carries out the reaction isopentenyl diphosphate + dimethylallyl diphosphate = (2E)-geranyl diphosphate + diphosphate. It catalyses the reaction isopentenyl diphosphate + (2E)-geranyl diphosphate = (2E,6E)-farnesyl diphosphate + diphosphate. The catalysed reaction is isopentenyl diphosphate + (2E,6E)-farnesyl diphosphate = (2E,6E,10E)-geranylgeranyl diphosphate + diphosphate. The protein operates within plant hormone biosynthesis; gibberellin biosynthesis. In terms of biological role, geranylgeranyl pyrophosphate synthase; part of the gene cluster that mediates the biosynthesis of gibberellins (GAs), diterpenoids that may provide a selective advantage during infection of the preferred host plant, rice. Gibberellins (GAs) are diterpenoids and are synthesized via the mevalonate pathway. Biosynthesis of the major metabolite GA3 (gibberellic acid) from geranylgeranyl diphosphate (GGPP) requires 13 steps. The GGPP produced by the geranylgeranyl diphosphate synthase GGS2 is converted to ent-kaurene via ent-copalyldiphosphate in a two-step cyclization reaction performed by the bifunctional ent-copalyl diphosphate synthase/ent-kaurene synthase enzyme (CPS/KS). Ent-Kaurene is metabolized to GAs by a series of oxidation reactions catalyzed by cytochrome P450 monooxygenases. Cytochrome P450 monooxygenase P450-4 is an ent-kaurene oxidase that catalyzes the three oxidation steps between ent-kaurene and ent-kaurenoic acid. The highly multifunctional cytochrome P450 monooxygenase P450-1 then catalyzes four steps involving oxidation at two carbon atoms, in the main pathway from ent-kaurenoic acid to GA14 via GA12-aldehyde as well as producing kaurenolides and fujenoic acids as by-products. The cytochrome P450 monooxygenase P450-2 then converts GA14 to GA4 by removal of C-20. GA4 is further converted to GA7 by the GA4 desaturase DES via 1,2-desaturation before cytochrome P450 monooxygenase P450-3, a 13-hydroxylase, hydroxylates GA7 to GA3, the final product of the GA-biosynthetic pathway. In Gibberella fujikuroi (strain CBS 195.34 / IMI 58289 / NRRL A-6831) (Bakanae and foot rot disease fungus), this protein is Geranylgeranyl pyrophosphate synthase 2.